Reading from the N-terminus, the 1003-residue chain is MGVPALFRWLSRKYPKIISPVVEDDVTQEIGAAQFSDPNPNGELDNLYLDMNGIVHPCSHPEHKLPPETEDEMFLDVFKYTDRVLLMARPRKVLMIAVDGVAPRAKMNQQRSRRFRSAQDAKIAHEEKERQIRERESRGESIDDAIKGKKSWDSNAITPGTPFMDSLAQALRYWVAYKLATDPGWANLQVIISDATVPGEGEHKLMSFIRSQRSDPEYDPNTKHCIYGLDADLIFLGLATHEPHFRVLREDVFANQSRQMRISDQLSMTQDQKDSIAEQDAKKPFLWLHVNVLREYLEIELYNPHLSFPFDLERAIDDWVFMCFFVGNDFLPHLPSLDVRDNGIDILVNCWKRMLPKLRDYITCDGNLNLESVEKLLSSLSYKEDEIFRKRHEGEKRREENDKRRKLAQEEEKALKNQYIPQVSKGSDKAPLTADINMPLLSTSGDAVEGYAQLSNKDIVENRDVITKANMSNADAAAALKKLLDSKNNKESDKNVSASAAIQEQQNKSDINTTENSKKRPIDQVEAELPKPDENGDSVRMWEPGYRQRYYQSKFGVVSEEEINKIRRDMVRCYLEGISWVLLYYYQGCPSWQWYYPYHYAPFAADFVNINDIIGEQGIKFTLGEPFKPYEQLMSVLPAASGHNLPEVLRILMSDPSSEILDFYPEEFQIDMNGKKMSWQGIALLPFIDENRLLEALEKRYHLLTDDERERNTLKNEVLFISNQNKNYKRFYNELYDNNVKELKFRFSRSSLAGTVIKNEYFVPDGITKFPLSEGDMPDLNNIEFFQSSYKMPTKKMGKSMLINGYISHTRTLTQEDRDSILHGNQRNGGYNRFRTPNDNSGYVNKGPSGKEDYLIYSMRRGGYRAFMHNLKNQNQQHQQPVPMNAMANNSYDNQYNSYSNNNNYNNNYNGGYPNQSNNNYSNQNSYNNYSNQNSYNNYNNQNSYNNYNNRNNHGNYNNYNRYNNQGSNYDRQGQGNASSNRSGYIPAPNRTGNFRNRNGYNR.

The interval 107-145 is disordered; it reads MNQQRSRRFRSAQDAKIAHEEKERQIRERESRGESIDDA. Basic and acidic residues predominate over residues 117–145; it reads SAQDAKIAHEEKERQIRERESRGESIDDA. Residues 389–419 are a coiled coil; sequence RKRHEGEKRREENDKRRKLAQEEEKALKNQY. A disordered region spans residues 488–538; sequence NNKESDKNVSASAAIQEQQNKSDINTTENSKKRPIDQVEAELPKPDENGDS. Positions 495-515 are enriched in polar residues; it reads NVSASAAIQEQQNKSDINTTE. Residues 516-534 are compositionally biased toward basic and acidic residues; the sequence is NSKKRPIDQVEAELPKPDE. Residues 690-730 adopt a coiled-coil conformation; sequence ENRLLEALEKRYHLLTDDERERNTLKNEVLFISNQNKNYKR. Disordered regions lie at residues 821-847 and 874-1003; these read ILHGNQRNGGYNRFRTPNDNSGYVNKG and QNQQ…GYNR. Positions 823 to 843 are enriched in polar residues; sequence HGNQRNGGYNRFRTPNDNSGY. A compositionally biased stretch (low complexity) spans 889 to 970; that stretch reads NNSYDNQYNS…NRYNNQGSNY (82 aa). Polar residues-rich tracts occupy residues 971–983 and 991–1003; these read DRQGQGNASSNRS and RTGNFRNRNGYNR.

The protein belongs to the 5'-3' exonuclease family. XRN2/RAT1 subfamily. In terms of assembly, interacts with RAI1; the interaction is direct, stabilizes RAT1 protein structure and may stimulate its exoribonuclease activity. The interaction also stimulates RAI1 pyrophosphohydrolase activity, probably by recruiting it to mRNA substrates.

It is found in the nucleus. Functionally, possesses 5'-&gt;3' exoribonuclease activity. Required for the processing of nuclear mRNA and rRNA precursors. May promote the termination of transcription by RNA polymerase II. Essential for vegetative cell growth and chromosome segregation. In Debaryomyces hansenii (strain ATCC 36239 / CBS 767 / BCRC 21394 / JCM 1990 / NBRC 0083 / IGC 2968) (Yeast), this protein is 5'-3' exoribonuclease 2 (RAT1).